A 348-amino-acid chain; its full sequence is MLSSSPSAAAPGIGGYQPQRGAAVFTAAQWAELEQQALIYKYLVAGVPVPGDLLLPIRPHSSAAATYSFANPAAAPFYHHHHHPSLSYYAYYGKKLDPEPWRCRRTDGKKWRCSKEAHPDSKYCERHMHRGRNRSRKPVESKTAAPAPQSQPQLSNVTTATHDTDAPLPSLTVGAKTHGLSLGGAGSSQFHVDAPSYGSKYSLGAKADVGELSFFSGASGNTRGFTIDSPTDSSWHSLPSSVPPYPMSKPRDSGLLPGAYSYSHLEPSQELGQVTIASLSQEQERRSFGGGAGGMLGNVKHENQPLRPFFDEWPGRRDSWSEMDEERSNQTSFSTTQLSISIPMPRCD.

Residues 24 to 59 (VFTAAQWAELEQQALIYKYLVAGVPVPGDLLLPIRP) enclose the QLQ domain. Short sequence motifs (bipartite nuclear localization signal) lie at residues 94–112 (KKLD…KKWR) and 130–137 (RGRNRSRK). The WRC domain occupies 97-141 (DPEPWRCRRTDGKKWRCSKEAHPDSKYCERHMHRGRNRSRKPVES). Disordered stretches follow at residues 125–165 (ERHM…HDTD) and 306–348 (LRPF…PRCD). A compositionally biased stretch (basic residues) spans 127–136 (HMHRGRNRSR). Polar residues predominate over residues 148 to 161 (PQSQPQLSNVTTAT). Over residues 306–320 (LRPFFDEWPGRRDSW) the composition is skewed to basic and acidic residues. Polar residues predominate over residues 329–340 (NQTSFSTTQLSI).

This sequence belongs to the GRF family.

Its subcellular location is the nucleus. Transcription activator that plays a regulatory role in gibberellin-induced stem elongation. This Oryza sativa subsp. japonica (Rice) protein is Growth-regulating factor 5 (GRF5).